The primary structure comprises 545 residues: Chaperonin GroEL (545 aa).

ATP contacts are provided by residues 30-33 (TLGP), lysine 51, 87-91 (DGTTT), glycine 415, and aspartate 495.

The protein belongs to the chaperonin (HSP60) family. As to quaternary structure, forms a cylinder of 14 subunits composed of two heptameric rings stacked back-to-back. Interacts with the co-chaperonin GroES.

The protein resides in the cytoplasm. The catalysed reaction is ATP + H2O + a folded polypeptide = ADP + phosphate + an unfolded polypeptide.. Functionally, together with its co-chaperonin GroES, plays an essential role in assisting protein folding. The GroEL-GroES system forms a nano-cage that allows encapsulation of the non-native substrate proteins and provides a physical environment optimized to promote and accelerate protein folding. The protein is Chaperonin GroEL of Shewanella putrefaciens (strain CN-32 / ATCC BAA-453).